A 32-amino-acid polypeptide reads, in one-letter code: Delta-conotoxin-like CnVID (32 aa).

Intrachain disulfides connect Cys3-Cys18, Cys10-Cys22, and Cys17-Cys27. 4-hydroxyproline occurs at positions 6 and 14.

It belongs to the conotoxin O1 superfamily. As to expression, expressed by the venom duct.

Its subcellular location is the secreted. Functionally, delta-conotoxins bind to site 6 of voltage-gated sodium channels (Nav) and inhibit the inactivation process. This toxin acts on Nav1.2/SCN2A, Nav1.3/SCN3A and Nav1.6/SCN8A (EC(50)=1.7 uM). The polypeptide is Delta-conotoxin-like CnVID (Conus consors (Singed cone)).